The following is a 104-amino-acid chain: Large ribosomal subunit protein bL21 (104 aa).

The protein belongs to the bacterial ribosomal protein bL21 family. In terms of assembly, part of the 50S ribosomal subunit. Contacts protein L20.

Functionally, this protein binds to 23S rRNA in the presence of protein L20. This chain is Large ribosomal subunit protein bL21, found in Pseudomonas putida (strain GB-1).